Here is a 334-residue protein sequence, read N- to C-terminus: Probable GTP 3',8-cyclase (334 aa).

The region spanning 24–256 (PYGRKVTGLR…RKKYIIDGVE (233 aa)) is the Radical SAM core domain. Position 33 (Arg33) interacts with GTP. [4Fe-4S] cluster is bound by residues Cys40 and Cys44. S-adenosyl-L-methionine is bound at residue Tyr46. Residue Cys47 coordinates [4Fe-4S] cluster. Position 85 (Lys85) interacts with GTP. Gly89 is an S-adenosyl-L-methionine binding site. Thr113 provides a ligand contact to GTP. S-adenosyl-L-methionine is bound at residue Ser137. Lys176 serves as a coordination point for GTP. The [4Fe-4S] cluster site is built by Cys269 and Cys272. 274-276 (RLR) contacts GTP. Cys286 contacts [4Fe-4S] cluster.

It belongs to the radical SAM superfamily. MoaA family. [4Fe-4S] cluster is required as a cofactor.

It carries out the reaction GTP + AH2 + S-adenosyl-L-methionine = (8S)-3',8-cyclo-7,8-dihydroguanosine 5'-triphosphate + 5'-deoxyadenosine + L-methionine + A + H(+). Its pathway is cofactor biosynthesis; molybdopterin biosynthesis. Functionally, catalyzes the cyclization of GTP to (8S)-3',8-cyclo-7,8-dihydroguanosine 5'-triphosphate. The polypeptide is Probable GTP 3',8-cyclase (Methanosarcina acetivorans (strain ATCC 35395 / DSM 2834 / JCM 12185 / C2A)).